Reading from the N-terminus, the 288-residue chain is UDP-3-O-acyl-N-acetylglucosamine deacetylase (288 aa).

3 residues coordinate Zn(2+): histidine 79, histidine 236, and aspartate 240. Histidine 263 serves as the catalytic Proton donor.

This sequence belongs to the LpxC family. Zn(2+) is required as a cofactor.

The catalysed reaction is a UDP-3-O-[(3R)-3-hydroxyacyl]-N-acetyl-alpha-D-glucosamine + H2O = a UDP-3-O-[(3R)-3-hydroxyacyl]-alpha-D-glucosamine + acetate. It participates in glycolipid biosynthesis; lipid IV(A) biosynthesis; lipid IV(A) from (3R)-3-hydroxytetradecanoyl-[acyl-carrier-protein] and UDP-N-acetyl-alpha-D-glucosamine: step 2/6. Functionally, catalyzes the hydrolysis of UDP-3-O-myristoyl-N-acetylglucosamine to form UDP-3-O-myristoylglucosamine and acetate, the committed step in lipid A biosynthesis. The polypeptide is UDP-3-O-acyl-N-acetylglucosamine deacetylase (Rickettsia felis (strain ATCC VR-1525 / URRWXCal2) (Rickettsia azadi)).